We begin with the raw amino-acid sequence, 887 residues long: Alanine--tRNA ligase (887 aa).

Zn(2+) is bound by residues histidine 573, histidine 577, cysteine 676, and histidine 680.

Belongs to the class-II aminoacyl-tRNA synthetase family. Requires Zn(2+) as cofactor.

The protein resides in the cytoplasm. The enzyme catalyses tRNA(Ala) + L-alanine + ATP = L-alanyl-tRNA(Ala) + AMP + diphosphate. In terms of biological role, catalyzes the attachment of alanine to tRNA(Ala) in a two-step reaction: alanine is first activated by ATP to form Ala-AMP and then transferred to the acceptor end of tRNA(Ala). Also edits incorrectly charged Ser-tRNA(Ala) and Gly-tRNA(Ala) via its editing domain. This is Alanine--tRNA ligase from Corynebacterium jeikeium (strain K411).